A 431-amino-acid chain; its full sequence is MLSCTTSTMPGMICKNSDLEFDLLKPCFYPEEDDIYFGGHNSTPPGEDIWKKFELLPTPRLSPDSALAEHSLEPVNWATEMLLPEADLWSNPGEEEVFGQGGLRGCTSNPIILQDCMWSGFSNPGKPESVVSEKLPGGYRSLAVGAGTLAPGAAAAASSAGHERSGTAGVGRGKAAWLTELSHLDLECVDPAVVFFPANKREPMPVPTIPTSTGSAISLGDHQGLSSSLEDFLSNSGSVEEGGEEIYVVMLEETQFSKTVSRLPTAAHQENAALSPGCAQSSELILKRYDLIQEQHNYAAPPLPYVDREDARPQKKPRSHTSLALKCVFRPKAPRLGSRNNSDWENIERRRNHNRMERQRRDIMRSSFLNLRDLVPELVHNEKAAKVVILKKATEYIHTLQADESKLLVERKKLYERQQQLLQKIKQYALC.

The residue at position 36 (Tyr36) is a Phosphotyrosine; by Tyr-kinases. A bHLH domain is found at 348 to 400 (ERRRNHNRMERQRRDIMRSSFLNLRDLVPELVHNEKAAKVVILKKATEYIHTL). The interval 400–421 (LQADESKLLVERKKLYERQQQL) is leucine-zipper.

Efficient DNA binding requires dimerization with another bHLH protein.

The protein localises to the nucleus. Functionally, has apoptosis-inducing activity. This chain is Protein S-Myc (Mycs), found in Mus musculus (Mouse).